We begin with the raw amino-acid sequence, 757 residues long: Nitrogen fixation protein FixI (757 aa).

The Cytoplasmic portion of the chain corresponds to 1–121; sequence MSCCASSAAI…GEEEGDDLLK (121 aa). An HMA domain is found at 37-107; the sequence is RQTELSVPNA…AIAERGYQTH (71 aa). A metal cation-binding residues include cysteine 48 and cysteine 51. The helical transmembrane segment at 122–143 threads the bilayer; that stretch reads QLILAVAVSGFAATNIMLLSVS. Topologically, residues 144–158 are extracellular; that stretch reads VWSGADAATRDLFHW. Residues 159-178 traverse the membrane as a helical segment; that stretch reads ISALIAGPALIYAGRFFYKS. The Cytoplasmic segment spans residues 179–185; the sequence is AWNAIRH. A helical membrane pass occupies residues 186-206; that stretch reads GRTNMDVPIALAVSLSYGMSL. Residues 207–218 lie on the Extracellular side of the membrane; that stretch reads HETIGHGEHAWF. Residues 219 to 239 form a helical membrane-spanning segment; the sequence is DASVTLLFFLLIGRTLDHMMR. Residues 240–368 lie on the Cytoplasmic side of the membrane; sequence GRARTAISGL…RARYRRIADR (129 aa). Residues 369-391 form a helical membrane-spanning segment; that stretch reads AARYYSPAVHLLALLTFVGWMLV. Residues 392-398 lie on the Extracellular side of the membrane; the sequence is EGDVRHA. The helical transmembrane segment at 399–416 threads the bilayer; sequence MLVAVAVLIITCPCALGL. Over 417–688 the chain is Cytoplasmic; the sequence is AVPVVQVVAA…ETSRHAGQLI (272 aa). Aspartate 454 (4-aspartylphosphate intermediate) is an active-site residue. Mg(2+)-binding residues include aspartate 634 and aspartate 638. The chain crosses the membrane as a helical span at residues 689-708; it reads RQNFALAIGYNVIAVPIAIL. Residues 709–713 lie on the Extracellular side of the membrane; the sequence is GYATP. A helical transmembrane segment spans residues 714-732; that stretch reads LVAAVAMSSSSLVVVFNAL. Topologically, residues 733-757 are cytoplasmic; it reads RLKRSLAAGRGATPGTLIHSGAVTS.

It belongs to the cation transport ATPase (P-type) (TC 3.A.3) family. Type IB subfamily.

It is found in the cell membrane. It catalyses the reaction ATP + H2O = ADP + phosphate + H(+). Its function is as follows. FixI is a pump of a specific cation involved in symbiotic nitrogen fixation. The four proteins FixG, FixH, FixI, and FixS may participate in a membrane-bound complex coupling the FixI cation pump with a redox process catalyzed by FixG. This Rhizobium meliloti (strain 1021) (Ensifer meliloti) protein is Nitrogen fixation protein FixI (fixI).